A 141-amino-acid polypeptide reads, in one-letter code: Thioredoxin-like protein SkfH (141 aa).

Residues K2–L141 form the Thioredoxin domain. C41 and C44 are oxidised to a cystine.

Required for production of the bacteriocin SkfA. The chain is Thioredoxin-like protein SkfH from Bacillus subtilis (strain 168).